Reading from the N-terminus, the 315-residue chain is MANLKAIRDRIQSVKNTKKITEAMRLVAAARVRRAQEQVLATRPFADRLAQVLYGLQSRLRFEEANLPLLRKREVKSVGLLVISGDRGLCGGYNNNVIRRAENRAKEIKAEGLNYQFVLVGRKSTQYFQRRDQPIDATYSGLEQIPTAAEANQIADQLLSLFLSEEVDRIELIYTRFLSLVSSRPVVQTLLPLDPQGLEAADDEIFRLTTRGGKFEVEREKVASQVRPLAPDMIFEQDPVQILDSLLPLYLSNQLLRALQESAASELAARMTAMSNASENAGELINTLTLSYNKARQAAITQELLEVVGGAEALT.

Belongs to the ATPase gamma chain family. As to quaternary structure, F-type ATPases have 2 components, CF(1) - the catalytic core - and CF(0) - the membrane proton channel. CF(1) has five subunits: alpha(3), beta(3), gamma(1), delta(1), epsilon(1). CF(0) has three main subunits: a, b and c.

It localises to the cellular thylakoid membrane. In terms of biological role, produces ATP from ADP in the presence of a proton gradient across the membrane. The gamma chain is believed to be important in regulating ATPase activity and the flow of protons through the CF(0) complex. The sequence is that of ATP synthase gamma chain from Nostoc punctiforme (strain ATCC 29133 / PCC 73102).